A 402-amino-acid chain; its full sequence is MKFSQATILAIFASSALVSAAPANIVSEQTMVKREDVNAIVELINEIKHINQKRDLAEGEDLLELQRRADSVIGELVSALYNSGVIGLVWDKLTTDPSISSSLSNIIKSAIQGAIVQGGALIQAVWNSGLLGDVFNKLINDTDLRQALLDVGKALFNSAANLISIWLGGSSSSSSAAPAAAAAPATNGASKREIMEAAEYLSERDLASILSWIVQTIKDTGIVQSLVNQVINNPDTVISFLTSALKNGLVIVEDLYDWAKQSGLWDQALVYIQNNAGSWIKALAGLFGNALSNGTITASDINNAGSSSKPTGTTTASTATAAPKAATPAAASAAAPKAATSGSSSGSSSNNADLNALINKYGGGSGSTSTPTVDTSGLSSDVNTLVNAAGQAASSLKKRKLY.

The first 20 residues, 1–20, serve as a signal peptide directing secretion; sequence MKFSQATILAIFASSALVSA. Residues N140 and N293 are each glycosylated (N-linked (GlcNAc...) asparagine). Positions 302–322 are disordered; it reads NNAGSSSKPTGTTTASTATAA. Over residues 304 to 322 the composition is skewed to low complexity; that stretch reads AGSSSKPTGTTTASTATAA.

The sequence is that of Opaque-phase-specific protein OP4 (OPS4) from Candida albicans (strain WO-1) (Yeast).